Consider the following 294-residue polypeptide: Early 4 ORF6 protein (294 aa).

The Nuclear localization signal signature appears at 239-255 (ARRTRRLMLRAVRIIAE).

This sequence belongs to the adenoviridae E4 30 to 34 kDa protein family. Interacts with E1B-55k.

The protein localises to the host nucleus. Its subcellular location is the host cytoplasm. Its function is as follows. Plays a major role to prevent cellular inhibition of viral genome replication by nuclear bodies. Assembles an SCF-like E3 ubiquitin ligase complex based on the cellular proteins ELOB, ELOC, CUL5 and RBX1, in cooperation with viral E1B-55K. This viral RING-type ligase ubiquitinates cellular substrates prior to proteasomal degradation: p53/TP53, LIG4, MRE11-RAD50-NBS1 (MRN) complex, ITGA3, DAXX and BLM. In Homo sapiens (Human), this protein is Early 4 ORF6 protein.